The primary structure comprises 605 residues: uncharacterized protein (605 aa).

A helical membrane pass occupies residues 56-78; sequence ILWSSIAAACVILFAAYKTGAYF.

It localises to the cell membrane. This is an uncharacterized protein from Bacillus subtilis (strain 168).